Consider the following 702-residue polypeptide: Threonine--tRNA ligase (702 aa).

The tract at residues 1–30 (MSAPVHPVPGADGGDPLRPATPGLRSPQVP) is disordered. The TGS domain maps to 15 to 84 (DPLRPATPGL…DVDVEVTPVP (70 aa)). Positions 279–585 (DHRKLGIELD…LTEHYAGAFP (307 aa)) are catalytic. Zn(2+) contacts are provided by C384, H435, and H562.

The protein belongs to the class-II aminoacyl-tRNA synthetase family. Homodimer. It depends on Zn(2+) as a cofactor.

It is found in the cytoplasm. It carries out the reaction tRNA(Thr) + L-threonine + ATP = L-threonyl-tRNA(Thr) + AMP + diphosphate + H(+). Catalyzes the attachment of threonine to tRNA(Thr) in a two-step reaction: L-threonine is first activated by ATP to form Thr-AMP and then transferred to the acceptor end of tRNA(Thr). Also edits incorrectly charged L-seryl-tRNA(Thr). This is Threonine--tRNA ligase from Mycobacterium leprae (strain Br4923).